Here is a 694-residue protein sequence, read N- to C-terminus: MEDPSEEAEQPSGDPGMGMDSVEAGDTTPPTKRKSKFSALGKIFKPWKWRKKKSSDKFKETSEVLERKISMRKPREELVKRGVLLEDPEQDGEDSGKLSHAALKNGHTTPIGSARSSSPVLVEEEPERSLRNLTPEEESKKRLGSTGSQPNSEAEPGPEHAPKQPLLPPKRPLSSSCEAKEVPAGSTARSVSSTSGSTTVTSAATTAATDMTKTVKSFVGPTPAPAPAPRTLPAAPASANTAATTTAPAKQPPIPPPKPAQRNSNPIIAELSQAMNSGTVLSKPSPPLPPKRGIPSTSIPSLEPAASFTTKTANDQREKTVSLCLEPPLIIPPSSPSPPLPTHIPPEPPRSPLVPAKTFQIVPEVEFSSSSDLFQDISQQEDQKTEVPKKIQDQSFGESHIPSRLPPLPLHIRIQQALTSPLPVTPPLEGTHRAHSLLFENSDSFSEDTGTLGRTRSLPITIEMLKVPDDEEEEQTCPFVEDVTSTSATPSLPLCLREEEKESDSDSEGPIKYRDEEEDDDDDESHQSALANRVKRKDTLAMKLSSRPSEPETNLNSWPRKSKEEWNEIRHQIGNTLIRRLSQRPTAEELEQRNILQPKNEADRQAEKREIKRRLTRKLSQRPTVAELLARKILRFNEYVEVTDAHDYDRRADKPWTKLTPADKAAIRKELNEFKSSEMEVHVDSKHFTRYHRP.

Disordered regions lie at residues 1–354 (MEDP…SPLV) and 375–405 (QDISQQEDQKTEVPKKIQDQSFGESHIPSRL). Residues 45–54 (KPWKWRKKKS) are compositionally biased toward basic residues. Residues 55-84 (SDKFKETSEVLERKISMRKPREELVKRGVL) are compositionally biased toward basic and acidic residues. One copy of the RPEL 1 repeat lies at 63 to 88 (EVLERKISMRKPREELVKRGVLLEDP). A phosphoserine mark is found at S116, S118, S129, and S145. Composition is skewed to low complexity over residues 184–209 (AGSTARSVSSTSGSTTVTSAATTAAT) and 231–249 (TLPAAPASANTAATTTAPA). Positions 250 to 259 (KQPPIPPPKP) are enriched in pro residues. Residues S264, S285, S335, and S337 each carry the phosphoserine modification. Pro residues predominate over residues 329–352 (LIIPPSSPSPPLPTHIPPEPPRSP). Positions 381–392 (EDQKTEVPKKIQ) are enriched in basic and acidic residues. At S420 the chain carries Phosphoserine. Position 425 is a phosphothreonine (T425). S436, S446, S457, S503, S505, S549, and S582 each carry phosphoserine. A disordered region spans residues 467-562 (VPDDEEEEQT…TNLNSWPRKS (96 aa)). Residues 546–559 (SRPSEPETNLNSWP) are compositionally biased toward polar residues. 2 RPEL repeats span residues 575–600 (NTLIRRLSQRPTAEELEQRNILQPKN) and 613–638 (RRLTRKLSQRPTVAELLARKILRFNE). The tract at residues 589–608 (ELEQRNILQPKNEADRQAEK) is disordered. S620 carries the phosphoserine modification.

Belongs to the phosphatase and actin regulator family. Binds PPP1CA and actin.

It is found in the cytoplasm. It localises to the cell projection. The protein resides in the lamellipodium. In terms of biological role, regulator of protein phosphatase 1 (PP1) required for neural tube and optic fissure closure, and enteric neural crest cell (ENCCs) migration during development. Acts as an activator of PP1 by interacting with PPP1CA and preventing phosphorylation of PPP1CA at 'Thr-320'. During neural tube closure, localizes to the ventral neural tube and activates PP1, leading to down-regulate cell proliferation within cranial neural tissue and the neural retina. Also acts as a regulator of migration of enteric neural crest cells (ENCCs) by activating PP1, leading to dephosphorylation and subsequent activation of cofilin (COF1 or COF2) and repression of the integrin signaling through the RHO/ROCK pathway. This is Phosphatase and actin regulator 4 (Phactr4) from Mus musculus (Mouse).